A 344-amino-acid chain; its full sequence is N-acetyl-gamma-glutamyl-phosphate reductase (344 aa).

The active site involves Cys-150.

This sequence belongs to the NAGSA dehydrogenase family. Type 1 subfamily.

The protein resides in the cytoplasm. It catalyses the reaction N-acetyl-L-glutamate 5-semialdehyde + phosphate + NADP(+) = N-acetyl-L-glutamyl 5-phosphate + NADPH + H(+). Its pathway is amino-acid biosynthesis; L-arginine biosynthesis; N(2)-acetyl-L-ornithine from L-glutamate: step 3/4. Catalyzes the NADPH-dependent reduction of N-acetyl-5-glutamyl phosphate to yield N-acetyl-L-glutamate 5-semialdehyde. The polypeptide is N-acetyl-gamma-glutamyl-phosphate reductase (Pseudomonas aeruginosa (strain ATCC 15692 / DSM 22644 / CIP 104116 / JCM 14847 / LMG 12228 / 1C / PRS 101 / PAO1)).